A 471-amino-acid polypeptide reads, in one-letter code: Mitochondrial distribution and morphology protein 10 (471 aa).

The tract at residues 313–338 is disordered; that stretch reads SNSAATPPRIKNSDSQVLSNNSTDSK. Residues 325 to 338 are compositionally biased toward polar residues; it reads SDSQVLSNNSTDSK.

The protein belongs to the MDM10 family. As to quaternary structure, component of the ER-mitochondria encounter structure (ERMES) or MDM complex, composed of MMM1, MDM10, MDM12 and MDM34. Associates with the mitochondrial outer membrane sorting assembly machinery SAM(core) complex.

The protein resides in the mitochondrion outer membrane. Functionally, component of the ERMES/MDM complex, which serves as a molecular tether to connect the endoplasmic reticulum and mitochondria. Components of this complex are involved in the control of mitochondrial shape and protein biogenesis and may function in phospholipid exchange. MDM10 is involved in the late assembly steps of the general translocase of the mitochondrial outer membrane (TOM complex). Functions in the TOM40-specific route of the assembly of outer membrane beta-barrel proteins, including the association of TOM40 with the receptor TOM22 and small TOM proteins. Can associate with the SAM(core) complex as well as the MDM12-MMM1 complex, both involved in late steps of the major beta-barrel assembly pathway, that is responsible for biogenesis of all outer membrane beta-barrel proteins. May act as a switch that shuttles between both complexes and channels precursor proteins into the TOM40-specific pathway. Plays a role in mitochondrial morphology and in the inheritance of mitochondria. In Debaryomyces hansenii (strain ATCC 36239 / CBS 767 / BCRC 21394 / JCM 1990 / NBRC 0083 / IGC 2968) (Yeast), this protein is Mitochondrial distribution and morphology protein 10.